The following is a 92-amino-acid chain: Small ribosomal subunit protein uS19 (92 aa).

The protein belongs to the universal ribosomal protein uS19 family.

Functionally, protein S19 forms a complex with S13 that binds strongly to the 16S ribosomal RNA. The polypeptide is Small ribosomal subunit protein uS19 (Rhizobium rhizogenes (strain K84 / ATCC BAA-868) (Agrobacterium radiobacter)).